The following is a 57-amino-acid chain: U13-myrmicitoxin-Mri1a (57 aa).

Positions 1–23 (MKIIHVLLLVAVVAITMSPSIMA) are cleaved as a signal peptide. Residues 24 to 29 (ESVAEA) constitute a propeptide that is removed on maturation. Glutamic acid 1-amide is present on Glu-56.

In terms of tissue distribution, expressed by the venom gland.

It localises to the secreted. Its function is as follows. Induces paralysis 1 hour after injection into insects (blowfly L.caesar) but does not appear to be lethal. The chain is U13-myrmicitoxin-Mri1a from Manica rubida (European giant red ant).